A 302-amino-acid chain; its full sequence is Mitochondrial glycine transporter (302 aa).

3 Solcar repeats span residues 22-112 (HPVF…LKHH), 119-203 (PKPL…AKKL), and 213-297 (FSPV…MMEK). 6 helical membrane passes run 28–53 (FVCGSLSGTCSTLLFQPLDLVKTRLQ), 87–113 (GVSPSFLRCIPGVGLYFSTLYTLKHHF), 125–150 (VMLGAGSRTVAAVCMLPFTVVKTRYE), 178–201 (GLTATLMRDAPFSGIYLMFYTRAK), 217–243 (LNFGCGIVAGILASVATQPADVIKTHI), and 272–290 (GGLPRALRRTLMAAMAWTV).

It belongs to the mitochondrial carrier (TC 2.A.29) family. SLC25A38 subfamily.

It localises to the mitochondrion inner membrane. The catalysed reaction is glycine(in) = glycine(out). Functionally, mitochondrial glycine transporter that imports glycine into the mitochondrial matrix. Plays an important role in providing glycine for the first enzymatic step in heme biosynthesis, the condensation of glycine with succinyl-CoA to produce 5-aminolevulinate (ALA) in the mitochondrial matrix. Required during erythropoiesis. In terms of biological role, may play a role as pro-apoptotic protein that induces caspase-dependent apoptosis. The sequence is that of Mitochondrial glycine transporter from Xenopus tropicalis (Western clawed frog).